The following is a 495-amino-acid chain: Glycerol kinase (495 aa).

Residue T11 coordinates ADP. Residues T11, T12, and S13 each coordinate ATP. T11 serves as a coordination point for sn-glycerol 3-phosphate. R15 contributes to the ADP binding site. 4 residues coordinate sn-glycerol 3-phosphate: R81, E82, Y133, and D242. Glycerol-binding residues include R81, E82, Y133, D242, and Q243. Positions 264 and 307 each coordinate ADP. ATP contacts are provided by T264, G307, Q311, and G408. ADP-binding residues include G408 and N412.

It belongs to the FGGY kinase family.

It catalyses the reaction glycerol + ATP = sn-glycerol 3-phosphate + ADP + H(+). It functions in the pathway polyol metabolism; glycerol degradation via glycerol kinase pathway; sn-glycerol 3-phosphate from glycerol: step 1/1. Inhibited by fructose 1,6-bisphosphate (FBP). Key enzyme in the regulation of glycerol uptake and metabolism. Catalyzes the phosphorylation of glycerol to yield sn-glycerol 3-phosphate. This chain is Glycerol kinase, found in Acinetobacter baylyi (strain ATCC 33305 / BD413 / ADP1).